The following is a 549-amino-acid chain: Glucose-6-phosphate isomerase (549 aa).

Glu353 functions as the Proton donor in the catalytic mechanism. Active-site residues include His384 and Lys513.

This sequence belongs to the GPI family.

It localises to the cytoplasm. It catalyses the reaction alpha-D-glucose 6-phosphate = beta-D-fructose 6-phosphate. It participates in carbohydrate biosynthesis; gluconeogenesis. The protein operates within carbohydrate degradation; glycolysis; D-glyceraldehyde 3-phosphate and glycerone phosphate from D-glucose: step 2/4. Its function is as follows. Catalyzes the reversible isomerization of glucose-6-phosphate to fructose-6-phosphate. The sequence is that of Glucose-6-phosphate isomerase from Brucella abortus (strain S19).